The chain runs to 79 residues: Cytochrome c-551 (79 aa).

Residues 1–14 (DGQSIYESGTSPTC) show a composition bias toward polar residues. The interval 1-35 (DGQSIYESGTSPTCASCHDRGTAGAPKINEPGDWD) is disordered. C14, C17, H18, and M55 together coordinate heme c.

In terms of processing, binds 1 heme c group covalently per subunit.

In Halorhodospira halochloris (Ectothiorhodospira halochloris), this protein is Cytochrome c-551.